Consider the following 1390-residue polypeptide: ABC transporter G family member 43 (1390 aa).

Positions 1 to 22 (MTMPQTDGVEFASRNNLENGDG) are disordered. Residues 137 to 411 (SKLSRFTFSK…FEDCGFKCPQ (275 aa)) form the ABC transporter 1 domain. 171-178 (GPPGCGKT) contributes to the ATP binding site. The region spanning 489-701 (DMFKACSRRE…AEIGLTSNEF (213 aa)) is the ABC transmembrane type-2 1 domain. The next 6 membrane-spanning stretches (helical) occupy residues 507–527 (FVYV…MTVY), 541–561 (YLLG…LPEL), 594–614 (IPIS…VIGY), 626–646 (LILF…GAVF), 651–671 (VATT…GFIV), and 737–757 (FGAL…ALTF). Residues 798-1043 (FTFQDVQYFI…VIEYFMSIPG (246 aa)) form the ABC transporter 2 domain. ATP is bound at residue 835-842 (GVSGAGKT). The region spanning 1115–1329 (EQFKACLWKQ…VLNGLLTSQY (215 aa)) is the ABC transmembrane type-2 2 domain. 7 consecutive transmembrane segments (helical) span residues 1134-1154 (YNLT…ILFL), 1173-1193 (MFTV…FCVA), 1218-1238 (VLVE…IVYP), 1253-1273 (FYSI…LVVV), 1279-1299 (IAFT…GYVM), 1307-1327 (WWIW…LLTS), and 1362-1382 (LVAV…AFFI).

It belongs to the ABC transporter superfamily. ABCG family. PDR (TC 3.A.1.205) subfamily.

The protein resides in the membrane. May be a general defense protein. This Arabidopsis thaliana (Mouse-ear cress) protein is ABC transporter G family member 43 (ABCG43).